The chain runs to 1460 residues: MYNPYQQQGMGYQQQQQQQQQQPNGFYPQQQQGQSSNQPQGQPQPQQQMAFNQPQATGIGGMPQSFGNSFSTMPQQPQTGYNNNGNNGSVYGNGNFGQQPQQQQQQVKPQHTGYVPNSSMPMMNTTGTMPPPNPAQQPQLQSIQPQGTGYYQSANTANVHSVQPLQSQGTGYYVSTPNLISSNQTQQPLQAQGTGYYQSQPQQVPPPQQAQSLQPLKPQQTGFYLQPQNQAPLEPLKPTATGFVNSFANNGLNNDIKIPAIRLSFITAQDQAKFETLFRSIVTNGSNTVSGANCRKILMRSGLPPSQLARIWTLCDTSKAGELLFPEFALAMHLINDVLQGDTIPYELDSKTKNEVSSFIDAINLSIANQDSSANDAPKTPFDEFITAGVQNLQPQPTGYMPQTSFGIPLQSQITGGGVASALNPQSTGFMAPTTFNMSMNTGTPGLNPQITGGAPASMQPNITGNALQPQTTGMMPQTTGMMPQTSFGVNLGPQLTGGALQSQYTGGYGSVMPQQSGPASMPNLSFNQQGLQSQLTGLQPQPTGFLPPSNFSATMPLTAQKTGFGNNEIYTKSNFGNNLIDNSSQDKISTEEKSLFYKFLKLLILKTKVVRFPHCCGNFRKSGLNRADLEQIWNLCDINNTGQLNKQEFALGMHLVYGKLNGKPIPNVLPSSLIPSSTKLLDNLKNQLKTEPTTTKEKPSFGKIDALSYKNNDDDVLPNYRNRRKVYSAKNEEQSSFSSPSAKSVNHSSSTLQTDDISVDKTVEKKTAKPKYSGFSREINLKNIASLENEIKNISNPENCYDNSIPSDLTSRFDAIIAKLPNLFNEISTIDNEITNAKIQLYRKKNPSSIIGSGPNGEITENDRKKAKSRALLRARMSALTGKSTESEDSLSMEDEQQSAEIKRIQQENGKNQEIIKDIRSSISDISASLKSTMTGSNMISNQEFERWEFGIGLEDGVREFLDDLKSNSNKSVTESSPFVPSSTPTPVDDRSSSPSYSQFKTAEERAAYLKEQAKKRMKEKLAKFDKNRRNVTQSSRSISSENSREQPQQIAGSSNLVEPRATPFQEEKYVEVAQPTQPVQSTQPVQPTQPVQPTQPVQPTQPVQNVYNAKQESDDEDEDDEEKRLQEELKRLKLKKKADKEKRLAALRKQIEDAQNESDEEETNGKDNFGGHVNVPQAAPVAPSAAFSQNSTNAPRSVHAAVTPAAGKNSTGLPSTTMGHNPYFKDASASSTSTFDARAAEMQRRIQRGLDEDEDDGWSDEDESNNRVAVDNKVEEAKIGHPDHARAPPVTAAPLPSVTPVPPAVPVPQANTSNEKSSPIPIAPIPPSVTQEPPVPLAPPLPAVDGFQEPPIPSAPAIATAVQKSGSSTPALAGGVLPPPPPLPTQQASTSEPIIAHVDNYNGAEKGTGAYGSDSDDDVLSIPESVGTDEEEEGAQPVSTAGIPSIPPAGIPPPPPLP.

The span at 1 to 56 (MYNPYQQQGMGYQQQQQQQQQQPNGFYPQQQQGQSSNQPQGQPQPQQQMAFNQPQA) shows a compositional bias: low complexity. The segment at 1 to 151 (MYNPYQQQGM…SIQPQGTGYY (151 aa)) is disordered. Residues 65–79 (SFGNSFSTMPQQPQT) are compositionally biased toward polar residues. Low complexity-rich tracts occupy residues 80-110 (GYNNNGNNGSVYGNGNFGQQPQQQQQQVKPQ), 117-128 (NSSMPMMNTTGT), and 136-146 (QQPQLQSIQPQ). Repeat copies occupy residues 142–153 (SIQPQGTGYYQS), 164–175 (PLQSQGTGYYVS), 188–199 (PLQAQGTGYYQS), 215–226 (PLKPQQTGFYLQ), and 235–246 (PLKPTATGFVNS). The interval 142–568 (SIQPQGTGYY…TAQKTGFGNN (427 aa)) is 15 X 12 AA tandem repeats of [SPNAG]-[IL]-[QKNGT]-[PSA]-[QT]-[GQAPISTLYK]-T-G-[YFGML]-[YVMGAQL]-[QVLNPAG]-[ASQPN]. Residues 185–197 (TQQPLQAQGTGYY) are compositionally biased toward polar residues. Residues 185–214 (TQQPLQAQGTGYYQSQPQQVPPPQQAQSLQ) are disordered. A Phosphothreonine modification is found at threonine 241. EF-hand domains lie at 269-304 (QDQAKFETLFRSIVTNGSNTVSGANCRKILMRSGLP) and 306-338 (SQLARIWTLCDTSKAGELLFPEFALAMHLINDV). An EH 1 domain is found at 270 to 359 (DQAKFETLFR…SKTKNEVSSF (90 aa)). 11 consecutive repeat copies span residues 328-350 (FALAMHLINDVLQGDTIPYELDS), 392-403 (NLQPQPTGYMPQ), 409-420 (PLQSQITGGGVA), 422-433 (ALNPQSTGFMAP), 446-457 (GLNPQITGGAPA), 467-478 (ALQPQTTGMMPQ), 491-502 (NLGPQLTGGALQ), 503-511 (SQYTGGYGS), 531-541 (GLQSQLTGLQP), 542-549 (QPTGFLPP), and 557-568 (PLTAQKTGFGNN). The 2 X 23 AA repeats of F-A-L-[AG]-M-H-L-[IV]-[NY]-[DG]-[VK]-L-[QN]-G-[DK]-[TP]-I-P-[YN]-[EV]-L-[DP]-S stretch occupies residues 328-672 (FALAMHLIND…GKPIPNVLPS (345 aa)). Threonine 563 bears the Phosphothreonine mark. The 89-residue stretch at 593–681 (EKSLFYKFLK…SSLIPSSTKL (89 aa)) folds into the EH 2 domain. The region spanning 625–660 (LNRADLEQIWNLCDINNTGQLNKQEFALGMHLVYGK) is the EF-hand 3 domain. Aspartate 638, asparagine 640, threonine 642, glutamine 644, and glutamate 649 together coordinate Ca(2+). The 2-2 repeat unit spans residues 650–672 (FALGMHLVYGKLNGKPIPNVLPS). Disordered regions lie at residues 729–758 (SAKNEEQSSFSSPSAKSVNHSSSTLQTDDI), 880–901 (ALTGKSTESEDSLSMEDEQQSA), 969–1127 (NSNK…EKRL), and 1149–1460 (LRKQ…PPLP). Residues 735–757 (QSSFSSPSAKSVNHSSSTLQTDD) are compositionally biased toward polar residues. 2 positions are modified to phosphoserine: serine 739 and serine 749. A compositionally biased stretch (acidic residues) spans 888-899 (SEDSLSMEDEQQ). The segment covering 973 to 988 (SVTESSPFVPSSTPTP) has biased composition (low complexity). Residues threonine 985 and threonine 987 each carry the phosphothreonine modification. Residue serine 995 is modified to Phosphoserine. A compositionally biased stretch (basic and acidic residues) spans 1003 to 1030 (TAEERAAYLKEQAKKRMKEKLAKFDKNR). A compositionally biased stretch (polar residues) spans 1048–1058 (QPQQIAGSSNL). Repeat copies occupy residues 1076–1081 (QPTQPV), 1082–1087 (QSTQPV), 1088–1093 (QPTQPV), 1094–1099 (QPTQPV), and 1100–1105 (QPTQPV). The segment at 1076–1105 (QPTQPVQSTQPVQPTQPVQPTQPVQPTQPV) is 5 X 6 AA tandem repeats of Q-[PS]-T-Q-P-V. Residues 1076–1106 (QPTQPVQSTQPVQPTQPVQPTQPVQPTQPVQ) are compositionally biased toward low complexity. Residues 1111 to 1170 (AKQESDDEDEDDEEKRLQEELKRLKLKKKADKEKRLAALRKQIEDAQNESDEEETNGKDN) adopt a coiled-coil conformation. Serine 1160 carries the phosphoserine modification. The span at 1175 to 1188 (VNVPQAAPVAPSAA) shows a compositional bias: low complexity. Polar residues predominate over residues 1210–1221 (KNSTGLPSTTMG). A compositionally biased stretch (low complexity) spans 1228 to 1239 (DASASSTSTFDA). 2 positions are modified to phosphoserine: serine 1230 and serine 1233. Positions 1240–1252 (RAAEMQRRIQRGL) are enriched in basic and acidic residues. Residues 1253–1265 (DEDEDDGWSDEDE) show a composition bias toward acidic residues. Phosphoserine is present on serine 1261. Residues 1272–1288 (VDNKVEEAKIGHPDHAR) are compositionally biased toward basic and acidic residues. Low complexity predominate over residues 1289 to 1298 (APPVTAAPLP). A run of 8 repeats spans residues 1295–1300 (APLPSV), 1301–1306 (TPVPPA), 1307–1312 (VPVPQA), 1320–1325 (SPIPIA), 1326–1330 (PIPPS), 1335–1340 (PPVPLA), 1341–1346 (PPLPAV), and 1352–1357 (PPIPSA). The tract at residues 1295-1357 (APLPSVTPVP…GFQEPPIPSA (63 aa)) is 8 X 6 AA repeats of [ATVSP]-P-[LVI]-P-[SPQILA]-[VAS]. 2 stretches are compositionally biased toward pro residues: residues 1299 to 1308 (SVTPVPPAVP) and 1323 to 1344 (PIAPIPPSVTQEPPVPLAPPLP). Phosphothreonine is present on threonine 1301. The segment covering 1447-1460 (SIPPAGIPPPPPLP) has biased composition (pro residues).

The protein belongs to the PAN1 family. Component of the PAN1 actin cytoskeleton-regulatory complex. Post-translationally, phosphorylated by PRK1 on threonine residues in the L-x-x-Q-x-T-G motif of repeats 1-6 to 1-15. Phosphorylated by ARK1.

Its subcellular location is the cell membrane. It is found in the endosome membrane. It localises to the cytoplasm. The protein localises to the cytoskeleton. The protein resides in the actin patch. In terms of biological role, component of the PAN1 actin cytoskeleton-regulatory complex required for the internalization of endosomes during actin-coupled endocytosis. The complex links the site of endocytosis to the cell membrane-associated actin cytoskeleton. Mediates uptake of external molecules and vacuolar degradation of plasma membrane proteins. Plays a role in the proper organization of the cell membrane-associated actin cytoskeleton and promotes its destabilization. This Saccharomyces cerevisiae (strain YJM789) (Baker's yeast) protein is Actin cytoskeleton-regulatory complex protein PAN1 (PAN1).